The chain runs to 522 residues: Cytochrome P450 4e5, mitochondrial (522 aa).

Heme is bound by residues Glu-307 and Cys-443.

It belongs to the cytochrome P450 family. Requires heme as cofactor.

It localises to the mitochondrion. In terms of biological role, probably involved in steroid hormones biosynthesis. The sequence is that of Cytochrome P450 4e5, mitochondrial (Cyp4e5) from Drosophila mettleri (Fruit fly).